The primary structure comprises 237 residues: Cyclic nucleotide phosphodiesterase inhibitor (237 aa).

Residues Met-1–Gly-20 form the signal peptide. Residues Asn-28, Asn-65, and Asn-70 are each glycosylated (N-linked (GlcNAc...) asparagine). Cys-rich CT repeat units follow at residues Asp-57–Asn-81, Asn-82–Gly-105, Asp-116–Gly-139, Asp-140–Asn-162, and Asp-163–Lys-186. A glycan (N-linked (GlcNAc...) asparagine) is linked at Asn-153. A glycan (N-linked (GlcNAc...) asparagine) is linked at Asn-207.

Functionally, PDI acts by binding stoichiometrically to cyclic nucleotide phosphodiesterase, changing the KM of the enzyme for cAMP from 10 uM to 2 mM. The polypeptide is Cyclic nucleotide phosphodiesterase inhibitor (pdiA) (Dictyostelium discoideum (Social amoeba)).